Here is a 307-residue protein sequence, read N- to C-terminus: UDP-3-O-acyl-N-acetylglucosamine deacetylase (307 aa).

Residues His80, His239, and Asp243 each coordinate Zn(2+). His266 (proton donor) is an active-site residue.

This sequence belongs to the LpxC family. It depends on Zn(2+) as a cofactor.

The enzyme catalyses a UDP-3-O-[(3R)-3-hydroxyacyl]-N-acetyl-alpha-D-glucosamine + H2O = a UDP-3-O-[(3R)-3-hydroxyacyl]-alpha-D-glucosamine + acetate. It functions in the pathway glycolipid biosynthesis; lipid IV(A) biosynthesis; lipid IV(A) from (3R)-3-hydroxytetradecanoyl-[acyl-carrier-protein] and UDP-N-acetyl-alpha-D-glucosamine: step 2/6. Catalyzes the hydrolysis of UDP-3-O-myristoyl-N-acetylglucosamine to form UDP-3-O-myristoylglucosamine and acetate, the committed step in lipid A biosynthesis. The protein is UDP-3-O-acyl-N-acetylglucosamine deacetylase of Neisseria meningitidis serogroup C (strain 053442).